Reading from the N-terminus, the 126-residue chain is Nascent polypeptide-associated complex protein (126 aa).

Residues 10–77 (PRMMKQMQKM…AKKVAKAEEK (68 aa)) form the NAC-A/B domain.

Belongs to the NAC-alpha family. Homodimer. Interacts with the ribosome. Binds ribosomal RNA.

Contacts the emerging nascent chain on the ribosome. This chain is Nascent polypeptide-associated complex protein, found in Methanococcus maripaludis (strain C5 / ATCC BAA-1333).